Consider the following 296-residue polypeptide: UDP-N-acetylenolpyruvoylglucosamine reductase (296 aa).

The 166-residue stretch at 26-191 folds into the FAD-binding PCMH-type domain; the sequence is RIGGPANYFK…LSATFRLSKS (166 aa). The active site involves R170. C218 functions as the Proton donor in the catalytic mechanism. Residue E287 is part of the active site.

The protein belongs to the MurB family. Requires FAD as cofactor.

Its subcellular location is the cytoplasm. It catalyses the reaction UDP-N-acetyl-alpha-D-muramate + NADP(+) = UDP-N-acetyl-3-O-(1-carboxyvinyl)-alpha-D-glucosamine + NADPH + H(+). It participates in cell wall biogenesis; peptidoglycan biosynthesis. Functionally, cell wall formation. This Chlamydia felis (strain Fe/C-56) (Chlamydophila felis) protein is UDP-N-acetylenolpyruvoylglucosamine reductase.